The chain runs to 70 residues: Beta-insect excitatory toxin LqqIT1 (70 aa).

The 64-residue stretch at 2-65 folds into the LCN-type CS-alpha/beta domain; it reads KNGYAVDSSG…ISDARKKYCD (64 aa). 4 disulfides stabilise this stretch: cysteine 16–cysteine 37, cysteine 22–cysteine 42, cysteine 26–cysteine 44, and cysteine 38–cysteine 64.

Belongs to the long (4 C-C) scorpion toxin superfamily. Sodium channel inhibitor family. Beta subfamily. As to expression, expressed by the venom gland.

Its subcellular location is the secreted. In terms of biological role, excitatory insect beta-toxins induce a spastic paralysis. They bind voltage-independently at site-4 of sodium channels (Nav) and shift the voltage of activation toward more negative potentials thereby affecting sodium channel activation and promoting spontaneous and repetitive firing. In vivo, this toxin induces a fast excitatory contraction paralysis on fly larvae. It is active only on insects. The polypeptide is Beta-insect excitatory toxin LqqIT1 (Leiurus quinquestriatus quinquestriatus (Egyptian scorpion)).